We begin with the raw amino-acid sequence, 528 residues long: Na(+)/H(+) antiporter NhaB (528 aa).

Topologically, residues 1–23 (MPISLGNAFIKNFLGKAPDWYKV) are cytoplasmic. A helical membrane pass occupies residues 24–46 (AIIAFLIINPIVFFLINPFVAGW). Residues 47–95 (LLVAEFIFTLAMALKCYPLQPGGLLAIEAIAIGMTSPAQVKHELVANIE) are Periplasmic-facing. Residues 96–118 (VLLLLVFMVAGIYFMKHLLLFIF) traverse the membrane as a helical segment. The Cytoplasmic segment spans residues 119-129 (TKILLGIRSKT). A helical transmembrane segment spans residues 130–163 (LLSLAFCFAAAFLSAFLDALTVIAVVISVAIGFY). Residues 164–239 (SIYHKVASGN…ADQAGWLFGE (76 aa)) are Periplasmic-facing. The chain crosses the membrane as a helical span at residues 240–262 (FLIRMSPVTLPVFFCGLITCALV). The Cytoplasmic portion of the chain corresponds to 263–297 (EKLKVFGYGAKLPNNVRQILVDFDNEERKTRTNQD). The helical transmembrane segment at 298–317 (VAKLWVQGLIAVWLIVALAL) threads the bilayer. Topologically, residues 318–320 (HLA) are periplasmic. The chain crosses the membrane as a helical span at residues 321-340 (AVGLIGLSVIILATAFTGVI). The Cytoplasmic segment spans residues 341-352 (EEHSMGKAFEEA). The chain crosses the membrane as a helical span at residues 353–375 (LPFTALLAVFFSIVAVIIDQELF). The Periplasmic segment spans residues 376 to 389 (KPVIDAVLAVEDKG). The helical transmembrane segment at 390 to 412 (TQLALFYVANGLLSMVSDNVFVG) threads the bilayer. Residues 413 to 477 (TVYINEVKTA…PLIRLSYGRM (65 aa)) are Cytoplasmic-facing. The chain crosses the membrane as a helical span at residues 478–500 (VIMALPYTIVLAIVGLMGIMFFL). The Periplasmic segment spans residues 501–528 (EPATASFYDAGWILPHSGDLTPVVSGGH).

This sequence belongs to the NhaB Na(+)/H(+) (TC 2.A.34) antiporter family.

Its subcellular location is the cell inner membrane. The catalysed reaction is 2 Na(+)(in) + 3 H(+)(out) = 2 Na(+)(out) + 3 H(+)(in). Na(+)/H(+) antiporter that extrudes sodium in exchange for external protons. The sequence is that of Na(+)/H(+) antiporter NhaB from Vibrio alginolyticus.